A 378-amino-acid chain; its full sequence is Acetylornithine deacetylase (378 aa).

His76 contributes to the Zn(2+) binding site. Asp78 is an active-site residue. Asp108 is a binding site for Zn(2+). The active site involves Glu140. Zn(2+) contacts are provided by Glu141, Glu165, and His351.

Belongs to the peptidase M20A family. ArgE subfamily. In terms of assembly, homodimer. Zn(2+) is required as a cofactor. Requires Co(2+) as cofactor. Glutathione serves as cofactor.

It is found in the cytoplasm. It catalyses the reaction N(2)-acetyl-L-ornithine + H2O = L-ornithine + acetate. It functions in the pathway amino-acid biosynthesis; L-arginine biosynthesis; L-ornithine from N(2)-acetyl-L-ornithine (linear): step 1/1. Its function is as follows. Catalyzes the hydrolysis of the amide bond of N(2)-acetylated L-amino acids. Cleaves the acetyl group from N-acetyl-L-ornithine to form L-ornithine, an intermediate in L-arginine biosynthesis pathway, and a branchpoint in the synthesis of polyamines. The sequence is that of Acetylornithine deacetylase from Vibrio atlanticus (strain LGP32) (Vibrio splendidus (strain Mel32)).